A 297-amino-acid polypeptide reads, in one-letter code: Syntaxin-4 (297 aa).

The segment covering 1 to 12 (MRDRTHELRQGD) has biased composition (basic and acidic residues). The interval 1–21 (MRDRTHELRQGDDSSDDEDKE) is disordered. The Cytoplasmic portion of the chain corresponds to 1–275 (MRDRTHELRQ…QKKARKKKVF (275 aa)). Ser14 and Ser15 each carry phosphoserine. Phosphothreonine is present on Thr31. A phosphoserine mark is found at Ser36, Ser117, Ser208, and Ser248. Positions 43–163 (QKVRTIRQTI…ERIRRQLKIT (121 aa)) form a coiled coil. The 63-residue stretch at 200–262 (LNEISARHSE…ERGQEHVKVA (63 aa)) folds into the t-SNARE coiled-coil homology domain. A helical; Anchor for type IV membrane protein membrane pass occupies residues 276 to 296 (IAICLSITVLILVVIIVISTL). Val297 is a topological domain (extracellular).

This sequence belongs to the syntaxin family. As to quaternary structure, component of the SNARE complex composed of STX4, SNAP23 and VAMP7 that interacts with SYT7 during lysosomal exocytosis. Found in a complex with VAMP8 and SNAP23. Detected in a complex with SNAP23 and STXBP4. Interacts with VAMP2. Interacts with SNAP23 and SNAPIN. Interacts with LLGL1. Interacts (via C-terminus) with CENPF. Interacts with DOC2B. Interacts with STXBP6. Interacts with STXBP3; excludes interaction with DOC2B and SNAP25. Interacts with STXBP4; excludes interaction with VAMP2. Interacts with STXBP5L.

The protein localises to the cell membrane. It is found in the cell projection. It localises to the neuron projection. Its subcellular location is the stereocilium. Plasma membrane t-SNARE that mediates docking of transport vesicles. Necessary for the translocation of SLC2A4 from intracellular vesicles to the plasma membrane. In neurons, recruited at neurite tips to membrane domains rich in the phospholipid 1-oleoyl-2-palmitoyl-PC (OPPC) which promotes neurite tip surface expression of the dopamine transporter SLC6A3/DAT by facilitating fusion of SLC6A3-containing transport vesicles with the plasma membrane. Together with STXB3 and VAMP2, may also play a role in docking/fusion of intracellular GLUT4-containing vesicles with the cell surface in adipocytes and in docking of synaptic vesicles at presynaptic active zones. Required for normal hearing. This Bos taurus (Bovine) protein is Syntaxin-4 (STX4).